A 715-amino-acid polypeptide reads, in one-letter code: Polyribonucleotide nucleotidyltransferase (715 aa).

Residues Asp-493 and Asp-499 each coordinate Mg(2+). Residues 560–619 (PRMITVKINPEKIRDVIGKGGSVIRALTEETGTTIDISDDGVVTIASTSSEGMAEAKKRI) form the KH domain. Positions 629-697 (GQVYEGTVLK…EKGRVRLSAK (69 aa)) constitute an S1 motif domain.

Belongs to the polyribonucleotide nucleotidyltransferase family. The cofactor is Mg(2+).

It is found in the cytoplasm. The enzyme catalyses RNA(n+1) + phosphate = RNA(n) + a ribonucleoside 5'-diphosphate. Its function is as follows. Involved in mRNA degradation. Catalyzes the phosphorolysis of single-stranded polyribonucleotides processively in the 3'- to 5'-direction. The sequence is that of Polyribonucleotide nucleotidyltransferase from Burkholderia cenocepacia (strain HI2424).